The sequence spans 205 residues: SREBP regulating gene protein (205 aa).

At 1–16 (MVPCGAVLWRRLLRKR) the chain is on the cytoplasmic side. A helical membrane pass occupies residues 17 to 35 (WVLGVVFGLSLVYFLSSTF). Residues 36-205 (KQEERTVRDR…GEYPPELLPV (170 aa)) lie on the Lumenal side of the membrane. Asn-67 carries N-linked (GlcNAc...) asparagine glycosylation.

Belongs to the SPRING family.

The protein resides in the golgi apparatus membrane. In terms of biological role, positively regulates hepatic SREBP signaling pathway by modulating the proper localization of SCAP (SREBP cleavage-activating protein) to the endoplasmic reticulum, thereby controlling the level of functional SCAP. The chain is SREBP regulating gene protein from Gallus gallus (Chicken).